Reading from the N-terminus, the 208-residue chain is Elongation factor Ts, chloroplastic (208 aa).

The protein belongs to the EF-Ts family.

The protein localises to the plastid. Its subcellular location is the chloroplast. Its function is as follows. Associates with the EF-Tu.GDP complex and induces the exchange of GDP to GTP. It remains bound to the aminoacyl-tRNA.EF-Tu.GTP complex up to the GTP hydrolysis stage on the ribosome. This is Elongation factor Ts, chloroplastic (tsf) from Cyanidium caldarium (Red alga).